The chain runs to 900 residues: 3'-5' exonuclease DinG (900 aa).

Residues 8 to 161 (VVDLETTGNQ…DEDATTTALL (154 aa)) form the Exonuclease domain. Positions 241-496 (SEVVKSLNLT…KAIDKLEQQR (256 aa)) constitute a Helicase ATP-binding domain. Residue 276–283 (APLGSGKS) coordinates ATP. A DEAH box motif is present at residues 448 to 451 (DEAH). The Helicase C-terminal domain maps to 713 to 893 (DYIQEYVTIT…QFSKLVNKIQ (181 aa)).

The protein belongs to the helicase family. DinG subfamily. Type 2 sub-subfamily.

3'-5' exonuclease. The polypeptide is 3'-5' exonuclease DinG (Staphylococcus haemolyticus (strain JCSC1435)).